The primary structure comprises 638 residues: SUMO-activating enzyme subunit 2 (638 aa).

Residues 24-29 (GAGGIG), D48, 56-59 (NLNR), K72, 95-96 (SI), and 117-122 (DNRAAR) each bind ATP. The Zn(2+) site is built by C158 and C161. Residue K164 forms a Glycyl lysine isopeptide (Lys-Gly) (interchain with G-Cter in SUMO1) linkage. Residue C173 is the Glycyl thioester intermediate of the active site. K190 participates in a covalent cross-link: Glycyl lysine isopeptide (Lys-Gly) (interchain with G-Cter in SUMO). The segment at 202–233 (ADQEVSPDRADPEAAWEPTEAEARARASNEDG) is disordered. S207 is subject to Phosphoserine. Positions 222 to 233 (AEARARASNEDG) are enriched in basic and acidic residues. A Glycyl lysine isopeptide (Lys-Gly) (interchain with G-Cter in SUMO1); alternate cross-link involves residue K236. Glycyl lysine isopeptide (Lys-Gly) (interchain with G-Cter in SUMO2); alternate cross-links involve residues K236 and K257. Residues K257 and K271 each participate in a glycyl lysine isopeptide (Lys-Gly) (interchain with G-Cter in SUMO); alternate cross-link. At K271 the chain carries N6-acetyllysine; alternate. K275 participates in a covalent cross-link: Glycyl lysine isopeptide (Lys-Gly) (interchain with G-Cter in SUMO). K369 participates in a covalent cross-link: Glycyl lysine isopeptide (Lys-Gly) (interchain with G-Cter in SUMO2). K418 participates in a covalent cross-link: Glycyl lysine isopeptide (Lys-Gly) (interchain with G-Cter in SUMO1); alternate. A Glycyl lysine isopeptide (Lys-Gly) (interchain with G-Cter in SUMO2); alternate cross-link involves residue K418. Zn(2+) contacts are provided by C439 and C442. Residue S505 is modified to Phosphoserine. Residue K538 forms a Glycyl lysine isopeptide (Lys-Gly) (interchain with G-Cter in SUMO2) linkage. Residues S548 and S590 each carry the phosphoserine modification. A compositionally biased stretch (basic and acidic residues) spans 548–561 (SPEKVGPKQAEDAA). The segment at 548 to 638 (SPEKVGPKQA…EDPDDVIALD (91 aa)) is disordered. The segment covering 581–594 (EQDDVLIVDSDEEG) has biased composition (acidic residues). Positions 603–614 (GDDKARKRKLEE) are enriched in basic and acidic residues. Residue K609 forms a Glycyl lysine isopeptide (Lys-Gly) (interchain with G-Cter in SUMO) linkage. Residue K611 forms a Glycyl lysine isopeptide (Lys-Gly) (interchain with G-Cter in SUMO); alternate linkage. N6-acetyllysine; alternate is present on K611. K621 participates in a covalent cross-link: Glycyl lysine isopeptide (Lys-Gly) (interchain with G-Cter in SUMO). Positions 628–638 (MEDPDDVIALD) are enriched in acidic residues.

Belongs to the ubiquitin-activating E1 family. As to quaternary structure, heterodimer of SAE1 and UBA2/SAE2. The heterodimer corresponds to the two domains that are encoded on a single polypeptide chain in ubiquitin-activating enzyme E1. Interacts with UBE2I. Sumoylated with SUMO1 and SUMO2/3 and by UBC9. Sumoylation at Lys-236 inhibits enzymatic activity. Sumoylation at the C-terminal lysine cluster plays an essential role in nuclear trafficking. As to expression, broadly expressed, with highest levels in testis.

The protein resides in the cytoplasm. The protein localises to the nucleus. It participates in protein modification; protein sumoylation. Functionally, the heterodimer acts as an E1 ligase for SUMO1, SUMO2, SUMO3, and probably SUMO4. It mediates ATP-dependent activation of SUMO proteins followed by formation of a thioester bond between a SUMO protein and a conserved active site cysteine residue on UBA2/SAE2. This Mus musculus (Mouse) protein is SUMO-activating enzyme subunit 2 (Uba2).